Consider the following 107-residue polypeptide: Class I hydrophobin 3 (107 aa).

The signal sequence occupies residues 1–18; sequence MQFKVLAALVIGATLAAA. 4 disulfide bridges follow: cysteine 26–cysteine 86, cysteine 33–cysteine 80, cysteine 34–cysteine 67, and cysteine 87–cysteine 100. Asparagine 35 and asparagine 89 each carry an N-linked (GlcNAc...) asparagine glycan.

The protein belongs to the fungal hydrophobin family. Self-assembles to form functional amyloid fibrils called rodlets. Self-assembly into fibrillar rodlets occurs spontaneously at hydrophobic:hydrophilic interfaces and the rodlets further associate laterally to form amphipathic monolayers.

The protein localises to the secreted. It localises to the cell wall. Aerial growth, conidiation, and dispersal of filamentous fungi in the environment rely upon a capability of their secreting small amphipathic proteins called hydrophobins (HPBs) with low sequence identity. Class I can self-assemble into an outermost layer of rodlet bundles on aerial cell surfaces, conferring cellular hydrophobicity that supports fungal growth, development and dispersal; whereas Class II form highly ordered films at water-air interfaces through intermolecular interactions but contribute nothing to the rodlet structure. Pnh3 is a class I hydrophobin that might be involved in the attachment of the hydrophilic wall of hyphae to the hydrophobic surface of wood under inorganic phosphate (Pi)-deficient conditions and enable the mycelium to degrade efficiently the components of wood and to acquire nutrients containing Pi. This is Class I hydrophobin 3 from Pholiota nameko.